A 293-amino-acid chain; its full sequence is ATP phosphoribosyltransferase (293 aa).

It belongs to the ATP phosphoribosyltransferase family. Long subfamily. Mg(2+) is required as a cofactor.

It is found in the cytoplasm. The catalysed reaction is 1-(5-phospho-beta-D-ribosyl)-ATP + diphosphate = 5-phospho-alpha-D-ribose 1-diphosphate + ATP. It participates in amino-acid biosynthesis; L-histidine biosynthesis; L-histidine from 5-phospho-alpha-D-ribose 1-diphosphate: step 1/9. With respect to regulation, feedback inhibited by histidine. Functionally, catalyzes the condensation of ATP and 5-phosphoribose 1-diphosphate to form N'-(5'-phosphoribosyl)-ATP (PR-ATP). Has a crucial role in the pathway because the rate of histidine biosynthesis seems to be controlled primarily by regulation of HisG enzymatic activity. The chain is ATP phosphoribosyltransferase from Nitratidesulfovibrio vulgaris (strain ATCC 29579 / DSM 644 / CCUG 34227 / NCIMB 8303 / VKM B-1760 / Hildenborough) (Desulfovibrio vulgaris).